A 427-amino-acid chain; its full sequence is Probable protein phosphatase 2C 64 (427 aa).

The disordered stretch occupies residues 1 to 36 (MGNCVARSGTAVDAGGDGGEDGKRRRRRWKAPREDQ). Residues 53–331 (TATVYTQQGR…DDCAVVCLYL (279 aa)) enclose the PPM-type phosphatase domain. Residues Asp89, Gly90, Asp276, and Asp322 each contribute to the Mn(2+) site.

Belongs to the PP2C family. The cofactor is Mg(2+). Mn(2+) serves as cofactor.

It carries out the reaction O-phospho-L-seryl-[protein] + H2O = L-seryl-[protein] + phosphate. It catalyses the reaction O-phospho-L-threonyl-[protein] + H2O = L-threonyl-[protein] + phosphate. The polypeptide is Probable protein phosphatase 2C 64 (Oryza sativa subsp. japonica (Rice)).